Reading from the N-terminus, the 409-residue chain is Transcription termination factor 3, mitochondrial (409 aa).

The N-terminal 64 residues, 1–64 (MALLAQQLSR…KTDRALFSWS (64 aa)), are a transit peptide targeting the mitochondrion. The tract at residues 74–93 (RKSSTNSTLLPSVSEQPEKI) is disordered.

Belongs to the mTERF family.

Its subcellular location is the mitochondrion. Binds promoter DNA and regulates initiation of transcription. Required for normal mitochondrial transcription and translation, and for normal assembly of mitochondrial respiratory complexes. Required for normal mitochondrial function. Maintains 16S rRNA levels and functions in mitochondrial ribosome assembly by regulating the biogenesis of the 39S ribosomal subunit. This Rattus norvegicus (Rat) protein is Transcription termination factor 3, mitochondrial (Mterf3).